Here is a 395-residue protein sequence, read N- to C-terminus: Type III polyketide synthase A (395 aa).

63–70 provides a ligand contact to CoA; it reads KLEHLCKT. Residue Cys-172 is the Nucleophile of the active site. 224 to 225 contributes to the substrate binding site; that stretch reads GD. Residues Leu-274, 314 to 317, and Ala-317 each bind CoA; that span reads GGPA.

The protein belongs to the thiolase-like superfamily. Chalcone/stilbene synthases family. Homodimer. Interacts with 4CLL1/ACOS5 and TKPR1. Expressed in flowers and flower buds (at protein level), and, at very low levels, in roots, seedlings, leaves and stems. Mostly confined to anther tapetal cells.

It localises to the endoplasmic reticulum. Its pathway is secondary metabolite biosynthesis; flavonoid biosynthesis. Functionally, plant type III polyketide synthases (PKSs) that catalyzes the condensation of malonyl-CoA units with various CoA ester starter molecules to generate a diverse array of natural products including long-chain alkyl alpha-pyrones. Accepts up to C(20) chain-length fatty acyl CoAs as starter substrates, and carries out sequential condensations with malonyl-CoA to produce triketide and tetraketide alpha-pyrones, potential sporopollenin precursors. Favorite substrates for are midchain- and v-hydroxylated fatty acyl-CoAs (e.g. 12-hydroxyoctadecanoyl-CoA and 16-hydroxyhexadecanoyl-CoA). Required for pollen development and sporopollenin biosynthesis, the major constituent of exine in the outer pollen wall. In vitro, can use 4-coumaroyl-coenzyme A as substrate to produce bis-noryangonin and fatty acyl-coenzyme A as substrate to produce medium-chain alkyl pyrones. May play a role in both the synthesis of pollen fatty acids and phenolics found in exine. This Arabidopsis thaliana (Mouse-ear cress) protein is Type III polyketide synthase A.